We begin with the raw amino-acid sequence, 204 residues long: Holliday junction branch migration complex subunit RuvA (204 aa).

The tract at residues 1–67 (MIDYLYGTLD…GGVISLYGFF (67 aa)) is domain I. Residues 68–149 (TIEEREMYLL…TVNVLNKEKQ (82 aa)) form a domain II region. The tract at residues 150 to 154 (TGAET) is flexible linker. Positions 155-204 (IKNTMVSEAIAGLITLGYKMQQARVAVTNVYEHNENITLEDLIKKSLQYL) are domain III.

Belongs to the RuvA family. As to quaternary structure, homotetramer. Forms an RuvA(8)-RuvB(12)-Holliday junction (HJ) complex. HJ DNA is sandwiched between 2 RuvA tetramers; dsDNA enters through RuvA and exits via RuvB. An RuvB hexamer assembles on each DNA strand where it exits the tetramer. Each RuvB hexamer is contacted by two RuvA subunits (via domain III) on 2 adjacent RuvB subunits; this complex drives branch migration. In the full resolvosome a probable DNA-RuvA(4)-RuvB(12)-RuvC(2) complex forms which resolves the HJ.

Its subcellular location is the cytoplasm. In terms of biological role, the RuvA-RuvB-RuvC complex processes Holliday junction (HJ) DNA during genetic recombination and DNA repair, while the RuvA-RuvB complex plays an important role in the rescue of blocked DNA replication forks via replication fork reversal (RFR). RuvA specifically binds to HJ cruciform DNA, conferring on it an open structure. The RuvB hexamer acts as an ATP-dependent pump, pulling dsDNA into and through the RuvAB complex. HJ branch migration allows RuvC to scan DNA until it finds its consensus sequence, where it cleaves and resolves the cruciform DNA. This is Holliday junction branch migration complex subunit RuvA from Endomicrobium trichonymphae.